The chain runs to 172 residues: Co-chaperone protein HscB homolog (172 aa).

One can recognise a J domain in the interval 2-69 (NHFELFNLPV…DSRAAYLLAL (68 aa)).

Belongs to the HscB family. As to quaternary structure, interacts with HscA and stimulates its ATPase activity.

Functionally, co-chaperone involved in the maturation of iron-sulfur cluster-containing proteins. Seems to help targeting proteins to be folded toward HscA. The chain is Co-chaperone protein HscB homolog from Acinetobacter baumannii (strain AB307-0294).